We begin with the raw amino-acid sequence, 581 residues long: Invertase (581 aa).

The signal sequence occupies residues 1–22 (MFLKYILASGICLVSLLSSTNA). N-linked (GlcNAc...) asparagine glycans are attached at residues Asn37, Asn40, Asn46, Asn57, Asn62, and Asn79. Residues 94–97 (FMND), Gln113, and 158–159 (FS) each bind substrate. Residue Asp97 is part of the active site. Residues Asn168 and Asn175 are each glycosylated (N-linked (GlcNAc...) asparagine). Substrate-binding positions include 227 to 228 (RD) and Glu280. Asn322 carries an N-linked (GlcNAc...) asparagine glycan. Trp366 provides a ligand contact to substrate. N-linked (GlcNAc...) asparagine glycans are attached at residues Asn399, Asn409, Asn425, Asn446, Asn452, Asn519, and Asn569.

This sequence belongs to the glycosyl hydrolase 32 family. Glycosylated; contains 67% carbohydrates. This is composed of equimolar amounts of mannose and galactose. There is also a small amount of glucosamine present.

It catalyses the reaction Hydrolysis of terminal non-reducing beta-D-fructofuranoside residues in beta-D-fructofuranosides.. The polypeptide is Invertase (inv1) (Schizosaccharomyces pombe (strain 972 / ATCC 24843) (Fission yeast)).